We begin with the raw amino-acid sequence, 149 residues long: MSAKSRILVLNGPNLNLLGLREPTHYGNNTLAQIVDALTEQAHNAGVELEHLQSNREYELIEAIHAAYGKIDFIIINPAAFTHTSVALRDALLGVAIPFIEVHLSNVHAREPFRHHSYLSDKAEGVICGLGAQGYEFALSAAINKLQAK.

Catalysis depends on tyrosine 26, which acts as the Proton acceptor. Positions 77, 83, and 90 each coordinate substrate. Histidine 103 (proton donor) is an active-site residue. Residues 104-105 (LS) and arginine 114 contribute to the substrate site.

It belongs to the type-II 3-dehydroquinase family. Homododecamer.

It catalyses the reaction 3-dehydroquinate = 3-dehydroshikimate + H2O. Its pathway is metabolic intermediate biosynthesis; chorismate biosynthesis; chorismate from D-erythrose 4-phosphate and phosphoenolpyruvate: step 3/7. Catalyzes a trans-dehydration via an enolate intermediate. The polypeptide is 3-dehydroquinate dehydratase (Vibrio parahaemolyticus serotype O3:K6 (strain RIMD 2210633)).